The chain runs to 201 residues: Translation initiation factor IF-3 (201 aa).

The interval threonine 170 to glutamate 201 is disordered. Residues proline 182 to serine 195 show a composition bias toward polar residues.

It belongs to the IF-3 family. Monomer.

It is found in the cytoplasm. In terms of biological role, IF-3 binds to the 30S ribosomal subunit and shifts the equilibrium between 70S ribosomes and their 50S and 30S subunits in favor of the free subunits, thus enhancing the availability of 30S subunits on which protein synthesis initiation begins. This Porphyromonas gingivalis (strain ATCC BAA-308 / W83) protein is Translation initiation factor IF-3.